The following is a 131-amino-acid chain: Small ribosomal subunit protein uS8 (131 aa).

The protein belongs to the universal ribosomal protein uS8 family. In terms of assembly, part of the 30S ribosomal subunit. Contacts proteins S5 and S12.

Functionally, one of the primary rRNA binding proteins, it binds directly to 16S rRNA central domain where it helps coordinate assembly of the platform of the 30S subunit. This chain is Small ribosomal subunit protein uS8, found in Ruminiclostridium cellulolyticum (strain ATCC 35319 / DSM 5812 / JCM 6584 / H10) (Clostridium cellulolyticum).